The following is a 297-amino-acid chain: Probable porphobilinogen deaminase (297 aa).

Cysteine 233 carries the S-(dipyrrolylmethanemethyl)cysteine modification.

This sequence belongs to the HMBS family. Dipyrromethane serves as cofactor.

It carries out the reaction 4 porphobilinogen + H2O = hydroxymethylbilane + 4 NH4(+). It participates in porphyrin-containing compound metabolism; protoporphyrin-IX biosynthesis; coproporphyrinogen-III from 5-aminolevulinate: step 2/4. In terms of biological role, tetrapolymerization of the monopyrrole PBG into the hydroxymethylbilane pre-uroporphyrinogen in several discrete steps. This Thermoplasma volcanium (strain ATCC 51530 / DSM 4299 / JCM 9571 / NBRC 15438 / GSS1) protein is Probable porphobilinogen deaminase.